The sequence spans 444 residues: Alpha-N-acetylgalactosaminidase (444 aa).

NAD(+) is bound by residues 30-31, D52, N80, 101-104, H107, 121-122, and N150; these read LR, WEWH, and EV. Y179 contacts substrate. 208-212 contributes to the NAD(+) binding site; it reads SEAKW. Substrate contacts are provided by residues R213, 225-228, and Y307; that span reads YPTH. Residue Y225 participates in NAD(+) binding.

Belongs to the Gfo/Idh/MocA family. Glycosyl hydrolase 109 subfamily. NAD(+) is required as a cofactor.

The catalysed reaction is Cleavage of non-reducing alpha-(1-&gt;3)-N-acetylgalactosamine residues from human blood group A and AB mucin glycoproteins, Forssman hapten and blood group A lacto series glycolipids.. Functionally, glycosidase that has specific alpha-N-acetylgalactosaminidase activity. The protein is Alpha-N-acetylgalactosaminidase (nagA) of Elizabethkingia meningoseptica (Chryseobacterium meningosepticum).